The following is a 353-amino-acid chain: Protein CYTOKININ-RESPONSIVE GATA TRANSCRIPTION FACTOR 1 (353 aa).

The Nuclear localization signal 1 motif lies at 137 to 144 (IRKGAATD). The disordered stretch occupies residues 142-166 (ATDPEGGAVRKPRRRAQAHQDESQQ). A GATA-type zinc finger spans residues 178–203 (CSDCNTTKTPLWRSGPCGPKSLCNAC). The Nuclear localization signal 2 signature appears at 244–251 (EKRAADVD).

Belongs to the type IV zinc-finger family. Class B subfamily. In terms of tissue distribution, mostly expressed in leaves and stems, and, at low levels, in roots.

It localises to the nucleus. In terms of biological role, transcriptional regulator that specifically binds 5'-GATA-3' or 5'-GAT-3' motifs within gene promoters. Influences the expression of nuclear encoded chloroplast-targeted genes. Regulates chloroplast development and promotes chlorophyll accumulation. Modulates plant architecture (e.g. height, length and width of leaf blades, and flowering tillers production) and represses tillering, probably by modulating number of cells. Promotes senescence. Involved in grain filling, panicle development and starch production. This Oryza sativa subsp. japonica (Rice) protein is Protein CYTOKININ-RESPONSIVE GATA TRANSCRIPTION FACTOR 1.